A 320-amino-acid chain; its full sequence is Methionyl-tRNA formyltransferase (320 aa).

Ser-112 to Pro-115 lines the (6S)-5,6,7,8-tetrahydrofolate pocket.

It belongs to the Fmt family.

It carries out the reaction L-methionyl-tRNA(fMet) + (6R)-10-formyltetrahydrofolate = N-formyl-L-methionyl-tRNA(fMet) + (6S)-5,6,7,8-tetrahydrofolate + H(+). In terms of biological role, attaches a formyl group to the free amino group of methionyl-tRNA(fMet). The formyl group appears to play a dual role in the initiator identity of N-formylmethionyl-tRNA by promoting its recognition by IF2 and preventing the misappropriation of this tRNA by the elongation apparatus. This is Methionyl-tRNA formyltransferase from Shewanella woodyi (strain ATCC 51908 / MS32).